Reading from the N-terminus, the 163-residue chain is Regulator of chromosome segregation (163 aa).

Interacts with CpsD and ParB.

It localises to the cytoplasm. It is found in the nucleoid. The protein localises to the cell membrane. Its function is as follows. Required for cell division and chromosome segregation. Binds to DNA and is involved in segregating the origin of replication (oriC) region to new daughter cells. When the nucleoid is not properly segregated, involved in blocking the cell division to protect the nucleoid against premature truncation by the newly forming septum, a function which is dependent on CpsD and its autophosphorylation level. The polypeptide is Regulator of chromosome segregation (Streptococcus pneumoniae serotype 2 (strain D39 / NCTC 7466)).